The primary structure comprises 415 residues: Phosphoribosylamine--glycine ligase (415 aa).

An ATP-grasp domain is found at 108-311 (KKIMKKYNIP…LMQHIIDLDE (204 aa)). ATP is bound at residue 134 to 191 (IENCELPVVVKKDGLAAGKGVIIADTIEAARSAIEIMYGDEEEGTVVFETFLEGEEFS). Mg(2+)-binding residues include Glu-281 and Asn-283.

Belongs to the GARS family. It depends on Mg(2+) as a cofactor. Requires Mn(2+) as cofactor.

It catalyses the reaction 5-phospho-beta-D-ribosylamine + glycine + ATP = N(1)-(5-phospho-beta-D-ribosyl)glycinamide + ADP + phosphate + H(+). Its pathway is purine metabolism; IMP biosynthesis via de novo pathway; N(1)-(5-phospho-D-ribosyl)glycinamide from 5-phospho-alpha-D-ribose 1-diphosphate: step 2/2. The polypeptide is Phosphoribosylamine--glycine ligase (Staphylococcus aureus (strain Mu50 / ATCC 700699)).